The following is a 564-amino-acid chain: Sphingomyelin phosphodiesterase 1 (564 aa).

The first 17 residues, 1-17, serve as a signal peptide directing secretion; the sequence is MRIIYLISTVLLIYTNA. Residues 37 to 121 enclose the Saposin B-type domain; sequence FQPLCISCTG…IILPDCADPT (85 aa). Intrachain disulfides connect Cys-41-Cys-117, Cys-44-Cys-110, and Cys-72-Cys-83. N-linked (GlcNAc...) asparagine glycosylation occurs at Asn-151. Residues Asp-165 and His-167 each coordinate Zn(2+). 2 cysteine pairs are disulfide-bonded: Cys-180–Cys-185 and Cys-186–Cys-206. N-linked (GlcNAc...) asparagine glycosylation occurs at Asn-221. Residues Asp-234 and Asn-274 each coordinate Zn(2+). Cys-341 and Cys-389 are joined by a disulfide. Asn-351 carries an N-linked (GlcNAc...) asparagine glycan. Residues His-381, His-415, and His-417 each contribute to the Zn(2+) site. Residue Asn-430 is glycosylated (N-linked (GlcNAc...) asparagine). Intrachain disulfides connect Cys-538–Cys-542 and Cys-548–Cys-561. An N-linked (GlcNAc...) asparagine glycan is attached at Asn-556.

It belongs to the acid sphingomyelinase family. Zn(2+) serves as cofactor.

Its subcellular location is the secreted. It carries out the reaction a sphingomyelin + H2O = phosphocholine + an N-acylsphing-4-enine + H(+). The enzyme catalyses an N-acyl-15-methylhexadecasphing-4-enine-1-phosphocholine + H2O = an N-acyl-15-methylhexadecasphing-4-enine + phosphocholine + H(+). It participates in lipid metabolism; sphingolipid metabolism. Functionally, sphingomyelin phosphodiesterase (sphingomyelinase) that converts sphingomyelin to ceramide (N-acyl-sphingoid base) and phosphocholine at acidic pH. Displays its enzymatic activity when secreted. May play distinct roles in signaling. This is Sphingomyelin phosphodiesterase 1 (asm-1) from Caenorhabditis elegans.